Here is a 250-residue protein sequence, read N- to C-terminus: Ribosomal RNA small subunit methyltransferase J (250 aa).

Residues 101 to 102 (RD), 117 to 118 (ER), 153 to 154 (SS), and Asp-171 contribute to the S-adenosyl-L-methionine site.

Belongs to the methyltransferase superfamily. RsmJ family.

It is found in the cytoplasm. It carries out the reaction guanosine(1516) in 16S rRNA + S-adenosyl-L-methionine = N(2)-methylguanosine(1516) in 16S rRNA + S-adenosyl-L-homocysteine + H(+). Functionally, specifically methylates the guanosine in position 1516 of 16S rRNA. The polypeptide is Ribosomal RNA small subunit methyltransferase J (Escherichia coli O81 (strain ED1a)).